The chain runs to 134 residues: Cytochrome b (134 aa).

A run of 3 helical transmembrane segments spans residues 33–53, 77–98, and 113–133; these read FGSL…FLAM, WLIR…FLHV, and WNMG…GYVL. Residues His83 and His97 each contribute to the heme b site.

This sequence belongs to the cytochrome b family. As to quaternary structure, the cytochrome bc1 complex contains 11 subunits: 3 respiratory subunits (MT-CYB, CYC1 and UQCRFS1), 2 core proteins (UQCRC1 and UQCRC2) and 6 low-molecular weight proteins (UQCRH/QCR6, UQCRB/QCR7, UQCRQ/QCR8, UQCR10/QCR9, UQCR11/QCR10 and a cleavage product of UQCRFS1). This cytochrome bc1 complex then forms a dimer. It depends on heme b as a cofactor.

The protein localises to the mitochondrion inner membrane. Functionally, component of the ubiquinol-cytochrome c reductase complex (complex III or cytochrome b-c1 complex) that is part of the mitochondrial respiratory chain. The b-c1 complex mediates electron transfer from ubiquinol to cytochrome c. Contributes to the generation of a proton gradient across the mitochondrial membrane that is then used for ATP synthesis. In Microtus subterraneus (European pine vole), this protein is Cytochrome b (MT-CYB).